Reading from the N-terminus, the 511-residue chain is Phosphoenolpyruvate carboxylase (511 aa).

Belongs to the PEPCase type 2 family. As to quaternary structure, homotetramer. Mg(2+) is required as a cofactor.

The catalysed reaction is oxaloacetate + phosphate = phosphoenolpyruvate + hydrogencarbonate. Its activity is regulated as follows. Allosterically inhibited by L-aspartate and L-malate. PEPC activity is not affected by allosteric activators of E.coli PEPC such as glucose 6-phosphate, fructose 1,6-bisphosphate, and acetyl coenzyme A. Its function is as follows. Catalyzes the irreversible beta-carboxylation of phosphoenolpyruvate (PEP) to form oxaloacetate (OAA), a four-carbon dicarboxylic acid source for the tricarboxylic acid cycle. The chain is Phosphoenolpyruvate carboxylase from Saccharolobus solfataricus (strain ATCC 35092 / DSM 1617 / JCM 11322 / P2) (Sulfolobus solfataricus).